A 214-amino-acid chain; its full sequence is Transmembrane emp24 domain-containing protein p24beta3 (214 aa).

Residues 1-27 (MERRQAKIHVFVLIGLILLNSINQISS) form the signal peptide. The Lumenal segment spans residues 28–178 (LSVTVNDEEC…RHTNESTRKR (151 aa)). One can recognise a GOLD domain in the interval 35-122 (EECVQEYVLY…PETVSFYIHV (88 aa)). Residues 140–158 (VNVKIAELREALESVVAEQ) are a coiled coil. 2 positions are modified to omega-N-methylated arginine: arginine 164 and arginine 169. Asparagine 172 carries an N-linked (GlcNAc...) asparagine glycan. The helical transmembrane segment at 179–199 (VIFYTVGEYIFLAAASGLQVL) threads the bilayer. The Cytoplasmic portion of the chain corresponds to 200 to 214 (YIRKLFSKSVAYNRV). The short motif at 204–205 (LF) is the COPII vesicle coat-binding element. Positions 204–214 (LFSKSVAYNRV) match the COPI vesicle coat-binding motif. The Required for the export from the endoplasmic reticulum to the Golgi signature appears at 213–214 (RV).

The protein belongs to the EMP24/GP25L family. Probably oligomerizes with other members of the EMP24/GP25L family. Associates with the COPI vesicle coat (coatomer). Associates with the COPII vesicle coat (coatomer).

It is found in the golgi apparatus. The protein localises to the cis-Golgi network membrane. It localises to the golgi stack membrane. Involved in vesicular protein trafficking. Mainly functions in the early secretory pathway but also in post-Golgi membranes. Thought to act as cargo receptor at the lumenal side for incorporation of secretory cargo molecules into transport vesicles and to be involved in vesicle coat formation at the cytoplasmic side. This chain is Transmembrane emp24 domain-containing protein p24beta3, found in Arabidopsis thaliana (Mouse-ear cress).